The chain runs to 151 residues: Large ribosomal subunit protein eL19 (151 aa).

Residues 57 to 81 (KKGISSARVKKLKEQRKKGRRRGPG) show a composition bias toward basic residues. A disordered region spans residues 57–95 (KKGISSARVKKLKEQRKKGRRRGPGSRRGAAGARTPPKE).

It belongs to the eukaryotic ribosomal protein eL19 family. In terms of assembly, part of the 50S ribosomal subunit.

In terms of biological role, binds to the 23S rRNA. In Methanocaldococcus jannaschii (strain ATCC 43067 / DSM 2661 / JAL-1 / JCM 10045 / NBRC 100440) (Methanococcus jannaschii), this protein is Large ribosomal subunit protein eL19.